We begin with the raw amino-acid sequence, 346 residues long: Uroporphyrinogen decarboxylase (346 aa).

Residues 26-30, D76, Y153, S208, and H323 contribute to the substrate site; that span reads RQAGR.

It belongs to the uroporphyrinogen decarboxylase family. In terms of assembly, homodimer.

The protein resides in the cytoplasm. The catalysed reaction is uroporphyrinogen III + 4 H(+) = coproporphyrinogen III + 4 CO2. It functions in the pathway porphyrin-containing compound metabolism; protoporphyrin-IX biosynthesis; coproporphyrinogen-III from 5-aminolevulinate: step 4/4. Functionally, catalyzes the decarboxylation of four acetate groups of uroporphyrinogen-III to yield coproporphyrinogen-III. The protein is Uroporphyrinogen decarboxylase of Prochlorococcus marinus (strain MIT 9312).